The primary structure comprises 175 residues: MTALTRFAHSRSSWFLLTGTAIGLEAAALYFQYVMKLDPCVMCIYQRLAVFGILVAGLIGMTAPKYRLIRILGASCWAVSATWGLKLALALVNMQNNPSPFATCSFLPEFPTWMPLHEWFPAVMLPTGMCTDLPWRFMDVTMAEWMVVVFSTFLVIWLLFIVPILSGSTKPSLYK.

The Cytoplasmic portion of the chain corresponds to 1–13 (MTALTRFAHSRSS). The helical transmembrane segment at 14–30 (WFLLTGTAIGLEAAALY) threads the bilayer. Residues 31-48 (FQYVMKLDPCVMCIYQRL) lie on the Periplasmic side of the membrane. Residues C40 and C43 are joined by a disulfide bond. Residues 49 to 64 (AVFGILVAGLIGMTAP) form a helical membrane-spanning segment. At 65–71 (KYRLIRI) the chain is on the cytoplasmic side. Residues 72 to 89 (LGASCWAVSATWGLKLAL) form a helical membrane-spanning segment. The Periplasmic portion of the chain corresponds to 90 to 144 (ALVNMQNNPSPFATCSFLPEFPTWMPLHEWFPAVMLPTGMCTDLPWRFMDVTMAE). C104 and C130 are oxidised to a cystine. Residues 145–163 (WMVVVFSTFLVIWLLFIVP) traverse the membrane as a helical segment. Residues 164 to 175 (ILSGSTKPSLYK) lie on the Cytoplasmic side of the membrane.

Belongs to the DsbB family.

The protein localises to the cell inner membrane. Its function is as follows. Required for disulfide bond formation in some periplasmic proteins. Acts by oxidizing the DsbA protein. This Shewanella sp. (strain W3-18-1) protein is Disulfide bond formation protein B.